A 418-amino-acid polypeptide reads, in one-letter code: MIFDKGNVEDFDKELWDAIHAEEERQEHHIELIASENMVSKAVMAAQGSVLTNKYAEGYPGNRYYGGTECVDIVETLAIERAKKLFGAAFANVQAHSGSQANAAAYMALIEAGDTVLGMDLAAGGHLTHGSPVNFSGKTYHFVGYSVDADTEMLNYEAILEQAKAVQPKLIVAGASAYSRSIDFEKFRAIADHVGAYLMVDMAHIAGLVAAGVHPSPVPYAHIVTSTTHKTLRGPRGGLILTNDEALAKKINSAIFPGLQGGPLEHVIAAKAVAFKEALDPAFKDYAQAIIDNTAAMAAVFAQDDRFRLISGGTDNHVFLVDVTKVIANGKLAQNLLDEVNITLNKNAIPFETLSPFKTSGIRIGCAAITSRGMGVKESQTIARLIIKALVNHDQETILEEVRQEVRQLTDAFPLYKK.

(6S)-5,6,7,8-tetrahydrofolate-binding positions include L121 and 125–127 (GHL). K230 carries the N6-(pyridoxal phosphate)lysine modification. 355–357 (SPF) lines the (6S)-5,6,7,8-tetrahydrofolate pocket.

The protein belongs to the SHMT family. As to quaternary structure, homodimer. It depends on pyridoxal 5'-phosphate as a cofactor.

It localises to the cytoplasm. It carries out the reaction (6R)-5,10-methylene-5,6,7,8-tetrahydrofolate + glycine + H2O = (6S)-5,6,7,8-tetrahydrofolate + L-serine. Its pathway is one-carbon metabolism; tetrahydrofolate interconversion. The protein operates within amino-acid biosynthesis; glycine biosynthesis; glycine from L-serine: step 1/1. Functionally, catalyzes the reversible interconversion of serine and glycine with tetrahydrofolate (THF) serving as the one-carbon carrier. This reaction serves as the major source of one-carbon groups required for the biosynthesis of purines, thymidylate, methionine, and other important biomolecules. Also exhibits THF-independent aldolase activity toward beta-hydroxyamino acids, producing glycine and aldehydes, via a retro-aldol mechanism. The polypeptide is Serine hydroxymethyltransferase (Streptococcus pyogenes serotype M5 (strain Manfredo)).